Reading from the N-terminus, the 337-residue chain is tRNA N6-adenosine threonylcarbamoyltransferase (337 aa).

Fe cation-binding residues include histidine 111 and histidine 115. Residues 134–138, aspartate 167, glycine 180, and asparagine 272 each bind substrate; that span reads LVSGG. Aspartate 300 provides a ligand contact to Fe cation.

The protein belongs to the KAE1 / TsaD family. The cofactor is Fe(2+).

The protein resides in the cytoplasm. It carries out the reaction L-threonylcarbamoyladenylate + adenosine(37) in tRNA = N(6)-L-threonylcarbamoyladenosine(37) in tRNA + AMP + H(+). In terms of biological role, required for the formation of a threonylcarbamoyl group on adenosine at position 37 (t(6)A37) in tRNAs that read codons beginning with adenine. Is involved in the transfer of the threonylcarbamoyl moiety of threonylcarbamoyl-AMP (TC-AMP) to the N6 group of A37, together with TsaE and TsaB. TsaD likely plays a direct catalytic role in this reaction. This Klebsiella pneumoniae (strain 342) protein is tRNA N6-adenosine threonylcarbamoyltransferase.